A 296-amino-acid polypeptide reads, in one-letter code: MARAIWSGALTFGLVNIPVKLYTAVHQKEVRFHMLHDADGARIQLRRFCSTEEKEVPYEHIVKGYEVSPGRYVTVTREELEAFDPKATRTVEIHDFVELSEIDPAFFEASYYLVPDRSAAKAYRLLGDAMRKAGKVAIATAVLRTRESLCCVRPAAGGALALSTMNRADEIDSPGSLELPEAGEPSSRELQMAEQLVASLSGPFEPERYPDLRRERVLELIERKAEGQAIEAPAAEPAGAEVVSLADALSASLAAARRRGDEHEAPARGERRHAAAAAARTTGRPRAARASRKKRG.

The 177-residue stretch at 11 to 187 (TFGLVNIPVK…ELPEAGEPSS (177 aa)) folds into the Ku domain. The disordered stretch occupies residues 254 to 296 (AAARRRGDEHEAPARGERRHAAAAAARTTGRPRAARASRKKRG). The segment covering 258 to 273 (RRGDEHEAPARGERRH) has biased composition (basic and acidic residues). Low complexity predominate over residues 275–285 (AAAAARTTGRP). Residues 286–296 (RAARASRKKRG) show a composition bias toward basic residues.

It belongs to the prokaryotic Ku family. Homodimer. Interacts with LigD.

In terms of biological role, with LigD forms a non-homologous end joining (NHEJ) DNA repair enzyme, which repairs dsDNA breaks with reduced fidelity. Binds linear dsDNA with 5'- and 3'- overhangs but not closed circular dsDNA nor ssDNA. Recruits and stimulates the ligase activity of LigD. The polypeptide is Non-homologous end joining protein Ku (Anaeromyxobacter sp. (strain K)).